A 294-amino-acid polypeptide reads, in one-letter code: Lipoyl synthase (294 aa).

Residues Cys-41, Cys-46, Cys-52, Cys-67, Cys-71, Cys-74, and Ser-281 each coordinate [4Fe-4S] cluster. The region spanning Phe-53–Thr-270 is the Radical SAM core domain.

It belongs to the radical SAM superfamily. Lipoyl synthase family. Requires [4Fe-4S] cluster as cofactor.

Its subcellular location is the cytoplasm. The enzyme catalyses [[Fe-S] cluster scaffold protein carrying a second [4Fe-4S](2+) cluster] + N(6)-octanoyl-L-lysyl-[protein] + 2 oxidized [2Fe-2S]-[ferredoxin] + 2 S-adenosyl-L-methionine + 4 H(+) = [[Fe-S] cluster scaffold protein] + N(6)-[(R)-dihydrolipoyl]-L-lysyl-[protein] + 4 Fe(3+) + 2 hydrogen sulfide + 2 5'-deoxyadenosine + 2 L-methionine + 2 reduced [2Fe-2S]-[ferredoxin]. It participates in protein modification; protein lipoylation via endogenous pathway; protein N(6)-(lipoyl)lysine from octanoyl-[acyl-carrier-protein]: step 2/2. Its function is as follows. Catalyzes the radical-mediated insertion of two sulfur atoms into the C-6 and C-8 positions of the octanoyl moiety bound to the lipoyl domains of lipoate-dependent enzymes, thereby converting the octanoylated domains into lipoylated derivatives. This is Lipoyl synthase from Baumannia cicadellinicola subsp. Homalodisca coagulata.